A 1223-amino-acid chain; its full sequence is WD repeat-containing protein 11 (1223 aa).

WD repeat units follow at residues 59–108 and 111–154; these read KHKA…AQCE and EHVK…KLWK. 2 positions are modified to phosphoserine: serine 205 and serine 209. The stretch at 354–393 is one WD 3 repeat; it reads KTVRPFSMVCCPVNENAAALIVSDGRVMIWELKSAVCSRN. Residues serine 401 and serine 405 each carry the phosphoserine modification. WD repeat units lie at residues 470–509, 565–604, 707–744, 746–786, 792–830, and 892–939; these read RMCP…LHKE, NDES…LLRE, GSMG…SRGI, THRS…MVSS, NVTF…TCFR, and ALSN…HSLS.

In terms of assembly, component of the complex WDR11 composed of C17orf75, FAM91A1 and WDR11; FAM91A1 and WDR11 are required for proper location of the complex. Interacts with GLI3; the interaction associateS EMX1 with GLI3. Interacts with TBC1D23; this interaction may be indirect and recruits TBC1D23 to AP-1-derived vesicles. Interacts (via the N-terminal and the central portion of the protein) with EMX1. Broadly expressed in various organs including brain, eye,ear, lung, heart, kideny and gonads. Cerebral cortex. The entire developing central nervous system, except for the spinal cord, reveals expression. Expressed in the neuroepithelium, including the diencephalic region that gives rise to hypothalamic neurons. In the adult brain, intense expression is restricted to the olfactory bulb, the olfaction-related piriform cortex, the granule cell layer of the cerebellum, and neurons of the hippocampal formation. The brain demonstrated expression scattered throughout the hypothalamus, sometimes in clusters of neurons.

The protein resides in the cytoplasm. It is found in the cytoskeleton. The protein localises to the cilium basal body. It localises to the nucleus. Its subcellular location is the cilium axoneme. The protein resides in the cytoplasmic vesicle. It is found in the golgi apparatus. The protein localises to the trans-Golgi network. Involved in the Hedgehog (Hh) signaling pathway, is essential for normal ciliogenesis. Regulates the proteolytic processing of GLI3 and cooperates with the transcription factor EMX1 in the induction of downstream Hh pathway gene expression and gonadotropin-releasing hormone production. WDR11 complex facilitates the tethering of Adaptor protein-1 complex (AP-1)-derived vesicles. WDR11 complex acts together with TBC1D23 to facilitate the golgin-mediated capture of vesicles generated using AP-1. This chain is WD repeat-containing protein 11 (Wdr11), found in Mus musculus (Mouse).